The sequence spans 289 residues: Elongation factor Ts (289 aa).

The tract at residues 82–85 (TDFL) is involved in Mg(2+) ion dislocation from EF-Tu.

The protein belongs to the EF-Ts family.

It localises to the cytoplasm. Its function is as follows. Associates with the EF-Tu.GDP complex and induces the exchange of GDP to GTP. It remains bound to the aminoacyl-tRNA.EF-Tu.GTP complex up to the GTP hydrolysis stage on the ribosome. In Pseudomonas paraeruginosa (strain DSM 24068 / PA7) (Pseudomonas aeruginosa (strain PA7)), this protein is Elongation factor Ts.